The following is a 69-amino-acid chain: Mu-conotoxin-like Am3.1 (69 aa).

Positions 1–20 (MMSKLRVLLIICLLLFPLTA) are cleaved as a signal peptide. Positions 21–52 (VPLDGDQPADRPAERTQDDISSEHHPMFDAVR) are excised as a propeptide. The interval 22–43 (PLDGDQPADRPAERTQDDISSE) is disordered. Basic and acidic residues predominate over residues 28-43 (PADRPAERTQDDISSE). A 4-hydroxyproline; partial; in minor form modification is found at Pro66. Cys68 bears the Cysteine amide mark.

The protein belongs to the conotoxin M family. Post-translationally, mostly non-hydroxylated. Contains 3 disulfide bonds. Expressed by the venom duct.

The protein localises to the secreted. Its function is as follows. Mu-conotoxins block voltage-gated sodium channels (Nav). This Conus amadis (Amadis cone) protein is Mu-conotoxin-like Am3.1.